We begin with the raw amino-acid sequence, 234 residues long: Thrombin-like enzyme acutin (234 aa).

M1 is a propeptide. Positions 2-225 (VIGGDECDIN…YTDWIQRNIA (224 aa)) constitute a Peptidase S1 domain. 6 disulfide bridges follow: C8–C140, C27–C43, C75–C232, C119–C186, C151–C165, and C176–C201. An N-linked (GlcNAc...) asparagine glycan is attached at N21. Catalysis depends on charge relay system residues H42 and D87. S180 functions as the Charge relay system in the catalytic mechanism.

The protein belongs to the peptidase S1 family. Snake venom subfamily. As to quaternary structure, monomer. As to expression, expressed by the venom gland.

Its subcellular location is the secreted. In terms of biological role, thrombin-like snake venom serine protease. Has arginyl esterase and fibrinogen clotting activities. This chain is Thrombin-like enzyme acutin, found in Deinagkistrodon acutus (Hundred-pace snake).